Here is a 148-residue protein sequence, read N- to C-terminus: MNIAKQQQAFLGIDYGKKRIGLAFASSPLLIPLPIGNVEARSSLTLTAQALVSIIKERAVTTVVFGNPLPMQKAYASSVQSEIQELAALIQEMTAIEVILWDERLSSAQAERMLKSDCGLNRKQRKNSSDSLAATLILSSFLDSRKLY.

The protein belongs to the YqgF nuclease family.

It localises to the cytoplasm. Functionally, could be a nuclease involved in processing of the 5'-end of pre-16S rRNA. This chain is Putative pre-16S rRNA nuclease, found in Chlamydia trachomatis serovar L2 (strain ATCC VR-902B / DSM 19102 / 434/Bu).